The primary structure comprises 66 residues: DNA-directed RNA polymerase subunit Rpo10 (66 aa).

Zn(2+) is bound by residues Cys7, Cys10, Cys44, and Cys45.

The protein belongs to the archaeal Rpo10/eukaryotic RPB10 RNA polymerase subunit family. Part of the RNA polymerase complex. The cofactor is Zn(2+).

The protein localises to the cytoplasm. The enzyme catalyses RNA(n) + a ribonucleoside 5'-triphosphate = RNA(n+1) + diphosphate. In terms of biological role, DNA-dependent RNA polymerase (RNAP) catalyzes the transcription of DNA into RNA using the four ribonucleoside triphosphates as substrates. The sequence is that of DNA-directed RNA polymerase subunit Rpo10 from Staphylothermus marinus (strain ATCC 43588 / DSM 3639 / JCM 9404 / F1).